A 513-amino-acid polypeptide reads, in one-letter code: ATP synthase subunit alpha (513 aa).

169–176 (GDRQIGKT) is an ATP binding site.

The protein belongs to the ATPase alpha/beta chains family. In terms of assembly, F-type ATPases have 2 components, CF(1) - the catalytic core - and CF(0) - the membrane proton channel. CF(1) has five subunits: alpha(3), beta(3), gamma(1), delta(1), epsilon(1). CF(0) has three main subunits: a(1), b(2) and c(9-12). The alpha and beta chains form an alternating ring which encloses part of the gamma chain. CF(1) is attached to CF(0) by a central stalk formed by the gamma and epsilon chains, while a peripheral stalk is formed by the delta and b chains.

Its subcellular location is the cell inner membrane. It carries out the reaction ATP + H2O + 4 H(+)(in) = ADP + phosphate + 5 H(+)(out). In terms of biological role, produces ATP from ADP in the presence of a proton gradient across the membrane. The alpha chain is a regulatory subunit. The chain is ATP synthase subunit alpha from Francisella tularensis subsp. mediasiatica (strain FSC147).